A 375-amino-acid chain; its full sequence is Actin-binding Rho-activating protein (375 aa).

Composition is skewed to basic and acidic residues over residues 1-11 (MAPGEREREAG) and 79-99 (KPDR…SHIK). Disordered stretches follow at residues 1-20 (MAPG…LRKV) and 38-99 (NENS…SHIK). A phosphoserine mark is found at serine 150 and serine 182. Residues 173 to 182 (QEEPTWKSDS) are compositionally biased toward basic and acidic residues. The disordered stretch occupies residues 173-204 (QEEPTWKSDSVDTEDSGYGGDMEERPEQDAAP). Actin-binding regions lie at residues 193–293 (DMEE…AERA) and 294–375 (KRAE…TLLE). 2 interaction with actin regions span residues 234 to 279 (SQVD…GDEG) and 346 to 375 (MRAR…TLLE).

Binds F-actin and ABLIM1, ABLIM2 and ABLIM3. Interaction with ABLIM2 and ABLIM3 enhances activity. As to expression, expressed specifically in heart and skeletal muscle.

It localises to the cytoplasm. The protein resides in the myofibril. Its subcellular location is the sarcomere. It is found in the cytoskeleton. Its function is as follows. Acts as an activator of serum response factor (SRF)-dependent transcription possibly by inducing nuclear translocation of MKL1 or MKL2 and through a mechanism requiring Rho-actin signaling. The protein is Actin-binding Rho-activating protein of Mus musculus (Mouse).